The chain runs to 337 residues: Diacylglycerol O-acyltransferase 2-like protein 6 (337 aa).

2 helical membrane-spanning segments follow: residues 22–42 and 102–122; these read MPVYVFLGAIPIIVIPYFLVF and YIIASHPHGVLPYGTFINFAT.

This sequence belongs to the diacylglycerol acyltransferase family.

The protein localises to the endoplasmic reticulum membrane. It catalyses the reaction 1,2-di-(9Z-octadecenoyl)-sn-glycerol + (9Z)-octadecenoyl-CoA = 1,2,3-tri-(9Z-octadecenoyl)-glycerol + CoA. Diglyceride acyltransferase that uses fatty acyl-CoA as substrate. Particularly active with oleate as a substrate. Has no wax synthase activity to produce wax esters. The polypeptide is Diacylglycerol O-acyltransferase 2-like protein 6 (DGAT2L6) (Bos taurus (Bovine)).